The primary structure comprises 121 residues: Phosphoribosyl-ATP pyrophosphatase (121 aa).

Belongs to the PRA-PH family.

It localises to the cytoplasm. It catalyses the reaction 1-(5-phospho-beta-D-ribosyl)-ATP + H2O = 1-(5-phospho-beta-D-ribosyl)-5'-AMP + diphosphate + H(+). Its pathway is amino-acid biosynthesis; L-histidine biosynthesis; L-histidine from 5-phospho-alpha-D-ribose 1-diphosphate: step 2/9. The protein is Phosphoribosyl-ATP pyrophosphatase of Burkholderia vietnamiensis (strain G4 / LMG 22486) (Burkholderia cepacia (strain R1808)).